Here is a 227-residue protein sequence, read N- to C-terminus: Cytochrome c oxidase subunit 2 (227 aa).

The Mitochondrial intermembrane segment spans residues Met-1 to Ser-14. Residues Pro-15–Met-45 form a helical membrane-spanning segment. Over Leu-46 to Gln-59 the chain is Mitochondrial matrix. A helical transmembrane segment spans residues Glu-60–Met-87. The Mitochondrial intermembrane segment spans residues Asp-88–Leu-227. Positions 161, 196, 198, 200, 204, and 207 each coordinate Cu cation. Residue Glu-198 participates in Mg(2+) binding. Tyr-218 carries the phosphotyrosine modification.

It belongs to the cytochrome c oxidase subunit 2 family. As to quaternary structure, component of the cytochrome c oxidase (complex IV, CIV), a multisubunit enzyme composed of 14 subunits. The complex is composed of a catalytic core of 3 subunits MT-CO1, MT-CO2 and MT-CO3, encoded in the mitochondrial DNA, and 11 supernumerary subunits COX4I, COX5A, COX5B, COX6A, COX6B, COX6C, COX7A, COX7B, COX7C, COX8 and NDUFA4, which are encoded in the nuclear genome. The complex exists as a monomer or a dimer and forms supercomplexes (SCs) in the inner mitochondrial membrane with NADH-ubiquinone oxidoreductase (complex I, CI) and ubiquinol-cytochrome c oxidoreductase (cytochrome b-c1 complex, complex III, CIII), resulting in different assemblies (supercomplex SCI(1)III(2)IV(1) and megacomplex MCI(2)III(2)IV(2)). Found in a complex with TMEM177, COA6, COX18, COX20, SCO1 and SCO2. Interacts with TMEM177 in a COX20-dependent manner. Interacts with COX20. Interacts with COX16. Requires Cu cation as cofactor.

It localises to the mitochondrion inner membrane. The catalysed reaction is 4 Fe(II)-[cytochrome c] + O2 + 8 H(+)(in) = 4 Fe(III)-[cytochrome c] + 2 H2O + 4 H(+)(out). Its function is as follows. Component of the cytochrome c oxidase, the last enzyme in the mitochondrial electron transport chain which drives oxidative phosphorylation. The respiratory chain contains 3 multisubunit complexes succinate dehydrogenase (complex II, CII), ubiquinol-cytochrome c oxidoreductase (cytochrome b-c1 complex, complex III, CIII) and cytochrome c oxidase (complex IV, CIV), that cooperate to transfer electrons derived from NADH and succinate to molecular oxygen, creating an electrochemical gradient over the inner membrane that drives transmembrane transport and the ATP synthase. Cytochrome c oxidase is the component of the respiratory chain that catalyzes the reduction of oxygen to water. Electrons originating from reduced cytochrome c in the intermembrane space (IMS) are transferred via the dinuclear copper A center (CU(A)) of subunit 2 and heme A of subunit 1 to the active site in subunit 1, a binuclear center (BNC) formed by heme A3 and copper B (CU(B)). The BNC reduces molecular oxygen to 2 water molecules using 4 electrons from cytochrome c in the IMS and 4 protons from the mitochondrial matrix. The polypeptide is Cytochrome c oxidase subunit 2 (MT-CO2) (Rousettus leschenaultii (Leschenault's rousette)).